Here is a 165-residue protein sequence, read N- to C-terminus: Ureidoglycolate lyase (165 aa).

The protein belongs to the ureidoglycolate lyase family. Homodimer. Requires Ni(2+) as cofactor.

The enzyme catalyses (S)-ureidoglycolate = urea + glyoxylate. It participates in nitrogen metabolism; (S)-allantoin degradation. Catalyzes the catabolism of the allantoin degradation intermediate (S)-ureidoglycolate, generating urea and glyoxylate. Involved in the utilization of allantoin as nitrogen source. This chain is Ureidoglycolate lyase, found in Chelativorans sp. (strain BNC1).